A 193-amino-acid polypeptide reads, in one-letter code: MSPLVGVLALQGDVREHVAALKDSGAEALGVRRPEELGKVDGLVIPGGESTTMSNLLRVFELLDPLTERLRAGLPVYGSCAGMILLASEILDTRPDAVALGAIDMTVRRNAFGRQVDSFEGDLDFTGVDGAMHAVFIRAPWVERVGDDVEVLASAQGHPVAVRQGSALATAFHPEVTGDRRVHQLFVDMVRAG.

Position 48 to 50 (48 to 50 (GES)) interacts with L-glutamine. The Nucleophile role is filled by Cys80. Residues Arg109 and 137–138 (IR) each bind L-glutamine. Active-site charge relay system residues include His173 and Glu175.

Belongs to the glutaminase PdxT/SNO family. As to quaternary structure, in the presence of PdxS, forms a dodecamer of heterodimers. Only shows activity in the heterodimer.

It carries out the reaction aldehydo-D-ribose 5-phosphate + D-glyceraldehyde 3-phosphate + L-glutamine = pyridoxal 5'-phosphate + L-glutamate + phosphate + 3 H2O + H(+). The catalysed reaction is L-glutamine + H2O = L-glutamate + NH4(+). It functions in the pathway cofactor biosynthesis; pyridoxal 5'-phosphate biosynthesis. Catalyzes the hydrolysis of glutamine to glutamate and ammonia as part of the biosynthesis of pyridoxal 5'-phosphate. The resulting ammonia molecule is channeled to the active site of PdxS. This Mycobacteroides abscessus (strain ATCC 19977 / DSM 44196 / CCUG 20993 / CIP 104536 / JCM 13569 / NCTC 13031 / TMC 1543 / L948) (Mycobacterium abscessus) protein is Pyridoxal 5'-phosphate synthase subunit PdxT.